Consider the following 256-residue polypeptide: Alcohol dehydrogenase (256 aa).

Serine 2 carries the N-acetylserine modification. NAD(+) is bound by residues 12–41 (FVAGLGGIGLDTSKELLKRDLKNLVILDRI) and aspartate 65. Serine 140 contributes to the substrate binding site. Tyrosine 153 acts as the Proton acceptor in catalysis. Position 157 (lysine 157) interacts with NAD(+).

It belongs to the short-chain dehydrogenases/reductases (SDR) family. Homodimer.

The catalysed reaction is a primary alcohol + NAD(+) = an aldehyde + NADH + H(+). It catalyses the reaction a secondary alcohol + NAD(+) = a ketone + NADH + H(+). Inhibited by 2,2,2-trifluoroethanol and pyrazole. The polypeptide is Alcohol dehydrogenase (Adh) (Drosophila melanogaster (Fruit fly)).